The sequence spans 638 residues: MAPKPPSGTSSRAWDAVNPPLSEWVLDAVSSMGFTRMTPVQASAIPLFMAHKDVVVEAVTGSGKTLSFLIPVVEKLLRLEEPIKKHHVGAIIVSPTRELASQIYNVLTSLLAFHPASAAVINTSETEDVPRPKHSSSVLRVVPQLLLGGSTSPAEDLSTFLKRSPNLLVATPGRLLELLSSPHVYCPQSSFEMLVLDEADRLLDLGFKETLQNILRRLPKQRRTGLFSASVSEAVDQIVRVGLRNPVKVVVKVKGASGVDDKRTPASLQMTYLTQPPTGKFPALKHILNSVQPTPSKSIFFVSTCSGVDYLSVILPLILGNDFQLIPLHGKHPANVRQKNFNRFVNAHNPAILLTTDVASRGLDIPSVDLVVQIDPPSDPKTFIHRCGRAGRAGRRGLSVVLLHPGREEDYVSFLEVRKTPVAPFPHPITVSDAEAAAATETARKVVKADRAIHDRGQKAFVSWLRSYSKHQASSIFRVADLDWEGLGKAWGLLKLPKMPELKNFKGDKTLGVQMDWDTYAYKDKQREKRRLELLQEMAESGQQQTTNKKRPNETVAWSNNAENRNKKAKRRDMKQVRQERKRWEKMTEEEKKKALETEQMLEQIRAKNEEQRRLKRAAAKADKDAEEGGDEEFTGFD.

The Q motif motif lies at 14–42; it reads WDAVNPPLSEWVLDAVSSMGFTRMTPVQA. Residues 45–249 enclose the Helicase ATP-binding domain; that stretch reads IPLFMAHKDV…RVGLRNPVKV (205 aa). 58-65 contacts ATP; the sequence is AVTGSGKT. The short motif at 197–200 is the DEAD box element; sequence DEAD. One can recognise a Helicase C-terminal domain in the interval 283–437; that stretch reads ALKHILNSVQ…PITVSDAEAA (155 aa). Residues 521 to 629 are a coiled coil; the sequence is AYKDKQREKR…AKADKDAEEG (109 aa). Residues 538–638 are disordered; that stretch reads MAESGQQQTT…GGDEEFTGFD (101 aa). Residues 574–597 show a composition bias toward basic and acidic residues; sequence MKQVRQERKRWEKMTEEEKKKALE. Residues 625–638 are compositionally biased toward acidic residues; that stretch reads DAEEGGDEEFTGFD.

Belongs to the DEAD box helicase family. DDX55/SPB4 subfamily. In terms of assembly, component of pre-60S ribosomal complexes.

It is found in the nucleus. The protein resides in the nucleolus. It catalyses the reaction ATP + H2O = ADP + phosphate + H(+). ATP-binding RNA helicase involved in the biogenesis of 60S ribosomal subunits. Binds 90S pre-ribosomal particles and dissociates from pre-60S ribosomal particles after processing of 27SB pre-rRNA. Required for the normal formation of 18S rRNA through the processing of pre-rRNAs at sites A0, A1 and A2, and the normal formation of 25S and 5.8S rRNAs through the processing of pre-rRNAs at sites C1 and C2. In Emericella nidulans (strain FGSC A4 / ATCC 38163 / CBS 112.46 / NRRL 194 / M139) (Aspergillus nidulans), this protein is ATP-dependent rRNA helicase spb4.